We begin with the raw amino-acid sequence, 242 residues long: Ribosomal RNA small subunit methyltransferase G (242 aa).

Residues Gly-78, Leu-83, 130–131 (AE), and Arg-151 each bind S-adenosyl-L-methionine.

This sequence belongs to the methyltransferase superfamily. RNA methyltransferase RsmG family.

It localises to the cytoplasm. Specifically methylates the N7 position of guanine in position 518 of 16S rRNA. This chain is Ribosomal RNA small subunit methyltransferase G, found in Salinispora tropica (strain ATCC BAA-916 / DSM 44818 / JCM 13857 / NBRC 105044 / CNB-440).